A 225-amino-acid chain; its full sequence is UPF0758 protein SZO_09140 (225 aa).

The region spanning 102–224 (PVLSSAQVAE…YYSFREKSDL (123 aa)) is the MPN domain. 3 residues coordinate Zn(2+): histidine 173, histidine 175, and aspartate 186. Residues 173–186 (HNHPSGLTKPSAND) carry the JAMM motif motif.

The protein belongs to the UPF0758 family.

The chain is UPF0758 protein SZO_09140 from Streptococcus equi subsp. zooepidemicus (strain H70).